We begin with the raw amino-acid sequence, 515 residues long: MGKEKTHINLVVIGHVDAGKSTTTGHLIYKLGGIDARTIAKFEADAKEMGKSSFKYAWVLDKLKAERERGITIDIALWKFSTAKFEYTVIDAPGHRDFIKNMITGTSQADVALLVIDGNNFEAGIAEGGSTKEHALLAYTLGVKQLAVGINKMDDVKDKDGGPWAQGRYNEVVDYLGPELMKIGFKKKDKGDKKKGDKKEKKDKKDKGEKKYVCSATFVPISGWTGDNMLEKSTNMPWYTGPTLFEVLDAMKPPKRPTEDPLRLPLQDVYKIGGIGTVPVGRVETGILKAGMQVTFEPAGKAAVEVKSVEMHHTSVPQAIPGDNVGFNVKLTVKDIKRGDVCGDTKNDPPIPTECFLANVIIQDHKNIRNGYTPVLDCHTAHIACKFASILSKKDKRGKQTHDVSDDTEWATKDDAEPRNNRMNIAAKTGESVNVWLQPTKAMVVEAYSMYSPLGRFAVRDMKKTVAVGVIQCVQPRNMAKGATEELPIRGESDAVSKYIKFRPLPLKAGKKAKK.

Positions 5-258 (KTHINLVVIG…DAMKPPKRPT (254 aa)) constitute a tr-type G domain. The G1 stretch occupies residues 14–21 (GHVDAGKS). Residue 14-21 (GHVDAGKS) coordinates GTP. An N6,N6-dimethyllysine modification is found at Lys-55. The segment at 70–74 (GITID) is G2. At Lys-79 the chain carries N6,N6,N6-trimethyllysine. The G3 stretch occupies residues 91 to 94 (DAPG). GTP is bound by residues 91 to 95 (DAPGH) and 151 to 154 (NKMD). The tract at residues 151-154 (NKMD) is G4. The interval 187-206 (KKDKGDKKKGDKKEKKDKKD) is disordered. Basic and acidic residues predominate over residues 189-206 (DKGDKKKGDKKEKKDKKD). Positions 222–224 (SGW) are G5. N6-methyllysine is present on Lys-289. Lys-334 bears the N6,N6,N6-trimethyllysine mark. A disordered region spans residues 396 to 419 (KRGKQTHDVSDDTEWATKDDAEPR). Basic and acidic residues predominate over residues 398–419 (GKQTHDVSDDTEWATKDDAEPR). The residue at position 441 (Lys-441) is an N6,N6,N6-trimethyllysine.

Belongs to the TRAFAC class translation factor GTPase superfamily. Classic translation factor GTPase family. EF-Tu/EF-1A subfamily.

The protein localises to the cytoplasm. Functionally, this protein promotes the GTP-dependent binding of aminoacyl-tRNA to the A-site of ribosomes during protein biosynthesis. This Porphyra purpurea (Red seaweed) protein is Elongation factor 1-alpha S (TEF-S).